A 528-amino-acid polypeptide reads, in one-letter code: Glutamyl-tRNA(Gln) amidotransferase subunit B, mitochondrial (528 aa).

The transit peptide at 1-21 (MSWRLSFRTNLLIYNVRRRNY) directs the protein to the mitochondrion.

It belongs to the GatB/GatE family. GatB subfamily. As to quaternary structure, subunit of the heterotrimeric GatCAB amidotransferase (AdT) complex, composed of A, B and C subunits.

The protein resides in the mitochondrion. The catalysed reaction is L-glutamyl-tRNA(Gln) + L-glutamine + ATP + H2O = L-glutaminyl-tRNA(Gln) + L-glutamate + ADP + phosphate + H(+). Functionally, allows the formation of correctly charged Gln-tRNA(Gln) through the transamidation of misacylated Glu-tRNA(Gln) in the mitochondria. The reaction takes place in the presence of glutamine and ATP through an activated gamma-phospho-Glu-tRNA(Gln). This is Glutamyl-tRNA(Gln) amidotransferase subunit B, mitochondrial from Aedes aegypti (Yellowfever mosquito).